We begin with the raw amino-acid sequence, 245 residues long: rRNA adenine N-6-methyltransferase (245 aa).

S-adenosyl-L-methionine contacts are provided by Asn10, Leu12, Gly37, Glu58, Asp83, and Ser100.

It belongs to the class I-like SAM-binding methyltransferase superfamily. rRNA adenine N(6)-methyltransferase family.

It carries out the reaction adenosine(2085) in 23S rRNA + 2 S-adenosyl-L-methionine = N(6)-dimethyladenosine(2085) in 23S rRNA + 2 S-adenosyl-L-homocysteine + 2 H(+). This protein produces a dimethylation of the adenine residue at position 2085 in 23S rRNA, resulting in reduced affinity between ribosomes and macrolide-lincosamide-streptogramin B antibiotics. This chain is rRNA adenine N-6-methyltransferase, found in Streptococcus sanguinis.